Reading from the N-terminus, the 246-residue chain is Hsp70 nucleotide exchange factor fes-1 (246 aa).

Residues glutamine 23–alanine 40 show a composition bias toward polar residues. Residues glutamine 23–aspartate 63 form a disordered region. ARM repeat units follow at residues threonine 48 to proline 92, leucine 113 to glutamine 152, glutamine 155 to arginine 196, and histidine 214 to lysine 244.

The protein belongs to the FES1 family.

The protein localises to the cytoplasm. Its function is as follows. Functions as a nucleotide exchange factor (NEF) for Hsp70 chaperones which accelerates the release of ADP. Required for fully efficient Hsp70-mediated folding of proteins. The polypeptide is Hsp70 nucleotide exchange factor fes-1 (fes-1) (Neurospora crassa (strain ATCC 24698 / 74-OR23-1A / CBS 708.71 / DSM 1257 / FGSC 987)).